We begin with the raw amino-acid sequence, 391 residues long: Multidrug resistance protein MdtL (391 aa).

A run of 12 helical transmembrane segments spans residues 4–24 (FLICSFALVLLYPAGIDMYLV), 42–62 (IAFSVYLAGMAAAMLFAGKVA), 69–89 (PVAIPGAALFIIASVFCSLAE), 93–113 (LFLAGRFLQGLGAGCCYVVAF), 131–151 (LLNGITCIIPVLAPVLGHLIM), 158–178 (SLFWTMAMMGIAVLMLSLFIL), 203–222 (FFLSRVVITTLSVSVILTFV), 245–265 (ALTAGVSMTVSFSTPFALGIF), 269–289 (TLMITSQVLFLAAGITLAVSP), 293–313 (VSLFGITLICAGFSVGFGVAM), 331–351 (LGIAQVCGSSLWIWLAAVVGI), and 356–376 (MLIGILIACSIVSLLLIMFVA).

The protein belongs to the major facilitator superfamily. DHA1 family. MdtL (TC 2.A.1.2.22) subfamily.

It localises to the cell inner membrane. Its function is as follows. Confers resistance to chloramphenicol. This chain is Multidrug resistance protein MdtL, found in Escherichia coli O139:H28 (strain E24377A / ETEC).